The primary structure comprises 493 residues: MSNWDTKFLKKGYTFDDVLLIPAESHVLPNEVDLKTKLADNLTLNIPIITAAMDTVTGSKMAIAIARAGGLGVIHKNMSITEQAEEVRKVKRSENGVIIDPFFLTPEHKVSEAEELMQRYRISGVPIVETLANRKLVGIITNRDMRFISDYNAPISEHMTSEHLVTAAVGTDLETAERILHEHRIEKLPLVDNSGRLSGLITIKDIEKVIEFPHAAKDEFGRLLVAAAVGVTSDTFERAEALFEAGADAIVIDTAHGHSAGVLRKIAEIRAHFPNRTLIAGNIATAEGARALYDAGVDVVKVGIGPGSICTTRVVAGVGVPQVTAIYDAAAVAREYGKTIIADGGIKYSGDIVKALAAGGNAVMLGSMFAGTDEAPGETEIYQGRKFKTYRGMGSIAAMKKGSSDRYFQGSVNEANKLVPEGIEGRVAYKGAASDIVFQMLGGIRSGMGYVGAGDIQELHENAQFVEMSGAGLIESHPHDVQITNEAPNYSVH.

CBS domains lie at 97–155 (VIID…NAPI) and 159–219 (MTSE…AKDE). Residues Asp253 and 303–305 (GIG) each bind NAD(+). 2 residues coordinate K(+): Gly305 and Gly307. IMP is bound at residue Ser308. Cys310 provides a ligand contact to K(+). Cys310 serves as the catalytic Thioimidate intermediate. IMP contacts are provided by residues 343–345 (DGG), 366–367 (GS), and 390–394 (YRGMG). The active-site Proton acceptor is Arg406. Glu421 serves as a coordination point for IMP. K(+) is bound by residues Glu475, Ser476, and His477.

Belongs to the IMPDH/GMPR family. Homotetramer. K(+) is required as a cofactor.

The enzyme catalyses IMP + NAD(+) + H2O = XMP + NADH + H(+). It participates in purine metabolism; XMP biosynthesis via de novo pathway; XMP from IMP: step 1/1. Mycophenolic acid (MPA) is a non-competitive inhibitor that prevents formation of the closed enzyme conformation by binding to the same site as the amobile flap. In contrast, mizoribine monophosphate (MZP) is a competitive inhibitor that induces the closed conformation. MPA is a potent inhibitor of mammalian IMPDHs but a poor inhibitor of the bacterial enzymes. MZP is a more potent inhibitor of bacterial IMPDH. In terms of biological role, catalyzes the conversion of inosine 5'-phosphate (IMP) to xanthosine 5'-phosphate (XMP), the first committed and rate-limiting step in the de novo synthesis of guanine nucleotides, and therefore plays an important role in the regulation of cell growth. This Streptococcus pyogenes serotype M1 protein is Inosine-5'-monophosphate dehydrogenase.